Consider the following 101-residue polypeptide: Small ribosomal subunit protein eS24 (101 aa).

The protein belongs to the eukaryotic ribosomal protein eS24 family.

This Methanosarcina mazei (strain ATCC BAA-159 / DSM 3647 / Goe1 / Go1 / JCM 11833 / OCM 88) (Methanosarcina frisia) protein is Small ribosomal subunit protein eS24.